We begin with the raw amino-acid sequence, 425 residues long: Histidine--tRNA ligase (425 aa).

It belongs to the class-II aminoacyl-tRNA synthetase family. Homodimer.

The protein resides in the cytoplasm. The enzyme catalyses tRNA(His) + L-histidine + ATP = L-histidyl-tRNA(His) + AMP + diphosphate + H(+). This Buchnera aphidicola subsp. Baizongia pistaciae (strain Bp) protein is Histidine--tRNA ligase.